The primary structure comprises 602 residues: Bifunctional xylanase/deacetylase (602 aa).

An N-terminal signal peptide occupies residues 1–14 (MSATLLVPSMTVKA). One can recognise a GH11 domain in the interval 17 to 211 (TIYNNKTGNQ…SSGSASVYKN (195 aa)). The Nucleophile role is filled by glutamate 108. The active-site Proton donor is the glutamate 198. Residues 216–240 (GGSSSSSGNQGGNQGGNTGNENAGN) form a disordered region. Gly residues predominate over residues 224 to 233 (NQGGNQGGNT). One can recognise a CBM6 domain in the interval 249 to 366 (DKIQCETMTK…DAYLDYFNNS (118 aa)). The NodB homology domain maps to 402-578 (KLIALTFDDG…GLKNQGYTFV (177 aa)).

It belongs to the glycosyl hydrolase 11 (cellulase G) family. Post-translationally, in the later growth phases, seems to undergo a proteolytic cleavage into a 30 kDa protein possessing xylanolytic activity.

The protein resides in the secreted. It carries out the reaction Endohydrolysis of (1-&gt;4)-beta-D-xylosidic linkages in xylans.. It participates in glycan degradation; xylan degradation. Its function is as follows. Endo-acting xylanase which specifically cleaves internal linkages on the xylan backbone, releasing xylooligosaccharides. Is also probably able, via its C-terminal domain, to remove acetyl groups from acetylated xylan, and thus it is probably capable of hydrolyzing acetylated xylan. The chain is Bifunctional xylanase/deacetylase (xyn11A) from Pseudobutyrivibrio xylanivorans.